Reading from the N-terminus, the 316-residue chain is Annexin D7 (316 aa).

The residue at position 2 (Ala-2) is an N-acetylalanine. 4 Annexin repeats span residues 11-82 (PLPE…LWTF), 83-154 (EPAE…PLVS), 166-237 (TLAR…AVIK), and 241-312 (YPEK…ALLG). The Ca(2+) site is built by Phe-24, Gly-26, Gly-28, and Glu-68. A Phosphoserine modification is found at Ser-95. 2 positions are modified to phosphothreonine: Thr-100 and Thr-112. Tyr-129 is subject to Phosphotyrosine. Ca(2+) contacts are provided by Ile-254 and Gly-258. The residue at position 283 (Tyr-283) is a Phosphotyrosine. A Phosphoserine modification is found at Ser-288. Residues Asp-298, Thr-299, and Glu-304 each coordinate Ca(2+).

It belongs to the annexin (TC 1.A.31.1) family. As to expression, expressed in flowers.

The chain is Annexin D7 (ANNAT7) from Arabidopsis thaliana (Mouse-ear cress).